A 383-amino-acid chain; its full sequence is Chitinase-3-like protein 1 (383 aa).

An N-terminal signal peptide occupies residues 1–21; it reads MGLRVAQTGFVVLVLLQSCAA. The GH18 domain occupies 22–383; that stretch reads YKLICYYTSW…NAIKDVLAGV (362 aa). Cysteines 26 and 51 form a disulfide. Residue Asn-60 is glycosylated (N-linked (GlcNAc...) asparagine). Residues 70–71, 97–100, Tyr-141, 204–207, and Lys-263 contribute to the chitin site; these read EW, GGWN, and LTYD. A disulfide bridge connects residues Cys-300 and Cys-364. The important for AKT1 activation and IL8 production stretch occupies residues 324–338; that stretch reads QWVAYDDQESVKNKA. Residue Trp-352 participates in chitin binding.

The protein belongs to the glycosyl hydrolase 18 family. As to quaternary structure, monomer. In terms of tissue distribution, detected in mammary gland.

The protein resides in the secreted. It localises to the extracellular space. The protein localises to the cytoplasm. It is found in the perinuclear region. Its subcellular location is the endoplasmic reticulum. Carbohydrate-binding lectin with a preference for chitin. Has no chitinase activity. May play a role in tissue remodeling and in the capacity of cells to respond to and cope with changes in their environment. Plays a role in T-helper cell type 2 (Th2) inflammatory response and IL-13-induced inflammation, regulating allergen sensitization, inflammatory cell apoptosis, dendritic cell accumulation and M2 macrophage differentiation. Facilitates invasion of pathogenic enteric bacteria into colonic mucosa and lymphoid organs. Mediates activation of AKT1 signaling pathway and subsequent IL8 production in colonic epithelial cells. Regulates antibacterial responses in lung by contributing to macrophage bacterial killing, controlling bacterial dissemination and augmenting host tolerance. Also regulates hyperoxia-induced injury, inflammation and epithelial apoptosis in lung. This chain is Chitinase-3-like protein 1 (CHI3L1), found in Bubalus bubalis (Domestic water buffalo).